The sequence spans 324 residues: 4-hydroxybenzoyl-CoA reductase subunit beta (324 aa).

The region spanning 2-217 (NILTDFRTHR…AAIEVPPTGA (216 aa)) is the FAD-binding PCMH-type domain. Residues 29–36 (PLGAGTDL), T111, N115, and Q118 contribute to the FAD site. C122, C138, C146, and C155 together coordinate [4Fe-4S] cluster. 2 residues coordinate FAD: D162 and K224.

In terms of assembly, heterohexamer of two alpha, two beta and two gamma subunits. The cofactor is FAD. It depends on [4Fe-4S] cluster as a cofactor.

The catalysed reaction is oxidized 2[4Fe-4S]-[ferredoxin] + benzoyl-CoA + H2O = 4-hydroxybenzoyl-CoA + reduced 2[4Fe-4S]-[ferredoxin] + 2 H(+). Inactivated by low concentrations of cyanide in vitro. Functionally, component of a complex that catalyzes the reductive dehydroxylation of 4-hydroxybenzoyl-CoA to benzoyl-CoA. Reaction is not reversible. Is a key enzyme in the anaerobic degradation of phenolic compounds. The sequence is that of 4-hydroxybenzoyl-CoA reductase subunit beta (hcrB) from Thauera aromatica.